The following is a 253-amino-acid chain: Transcriptional regulatory protein TcrA (253 aa).

Positions 24–138 (RILVVEDEPK…ELFARLRALS (115 aa)) constitute a Response regulatory domain. The residue at position 73 (Asp73) is a 4-aspartylphosphate. The segment at residues 146–244 (PPTLEAGDLR…IRGAGYRLRK (99 aa)) is a DNA-binding region (ompR/PhoB-type).

In terms of assembly, interacts with HK2. Phosphorylated by HK2.

The protein resides in the cytoplasm. Functionally, member of the three-protein two-component system HK1/HK2/TcrA. The polypeptide is Transcriptional regulatory protein TcrA (tcrA) (Mycobacterium tuberculosis (strain ATCC 25618 / H37Rv)).